The chain runs to 79 residues: Acyl carrier protein (79 aa).

Residues 1–76 (MEVFEEVRDV…DVVTYIENLN (76 aa)) form the Carrier domain. The residue at position 36 (S36) is an O-(pantetheine 4'-phosphoryl)serine.

The protein belongs to the acyl carrier protein (ACP) family. 4'-phosphopantetheine is transferred from CoA to a specific serine of apo-ACP by AcpS. This modification is essential for activity because fatty acids are bound in thioester linkage to the sulfhydryl of the prosthetic group.

Its subcellular location is the cytoplasm. It functions in the pathway lipid metabolism; fatty acid biosynthesis. Functionally, carrier of the growing fatty acid chain in fatty acid biosynthesis. This is Acyl carrier protein from Campylobacter hominis (strain ATCC BAA-381 / DSM 21671 / CCUG 45161 / LMG 19568 / NCTC 13146 / CH001A).